The chain runs to 115 residues: NAD(P)H-quinone oxidoreductase subunit M (115 aa).

It belongs to the complex I NdhM subunit family. NDH-1 can be composed of about 15 different subunits; different subcomplexes with different compositions have been identified which probably have different functions.

It localises to the cellular thylakoid membrane. The catalysed reaction is a plastoquinone + NADH + (n+1) H(+)(in) = a plastoquinol + NAD(+) + n H(+)(out). It catalyses the reaction a plastoquinone + NADPH + (n+1) H(+)(in) = a plastoquinol + NADP(+) + n H(+)(out). Functionally, NDH-1 shuttles electrons from an unknown electron donor, via FMN and iron-sulfur (Fe-S) centers, to quinones in the respiratory and/or the photosynthetic chain. The immediate electron acceptor for the enzyme in this species is believed to be plastoquinone. Couples the redox reaction to proton translocation, and thus conserves the redox energy in a proton gradient. Cyanobacterial NDH-1 also plays a role in inorganic carbon-concentration. In Prochlorococcus marinus (strain MIT 9313), this protein is NAD(P)H-quinone oxidoreductase subunit M.